The sequence spans 137 residues: Large ribosomal subunit protein uL16 (137 aa).

Basic residues predominate over residues 1 to 17 (MLQPKRTKFRKTHKGRN). The tract at residues 1 to 24 (MLQPKRTKFRKTHKGRNRGLANSG) is disordered.

This sequence belongs to the universal ribosomal protein uL16 family. As to quaternary structure, part of the 50S ribosomal subunit.

Binds 23S rRNA and is also seen to make contacts with the A and possibly P site tRNAs. In Aeromonas hydrophila subsp. hydrophila (strain ATCC 7966 / DSM 30187 / BCRC 13018 / CCUG 14551 / JCM 1027 / KCTC 2358 / NCIMB 9240 / NCTC 8049), this protein is Large ribosomal subunit protein uL16.